A 327-amino-acid chain; its full sequence is MEMQLGAMLYVYKGEYGLPSIDFECLRALCLLRFTRCPMDVQTSSNPLRSGAGKLPYLQIGNQKFAGYRQIKRVLDLEGYPIDAHLSTKQKHLSTAYANWVFTNLHAYYHYFLFGEPHNFDTTTRGLYAKRTPFPFNFYYPSSYQREACDVVQVMAGFDVNDKLDKHEGDYLVVNAKKVVNLLSRKLGRKVWFFGDTYSEFDAIVYSYLAIIFKIALPNNPLQNHIKGCQNLVNFINRITKDIFRIEGYSSVKLTKTPSGTEASLTASERKFLDSELNTKIVAGVGAVLAMGAFAAWRGIYNQLTTRSSTDYDGIDYEDDEMEEGLD.

A helical transmembrane segment spans residues 281-301 (IVAGVGAVLAMGAFAAWRGIY).

Belongs to the metaxin family. As to quaternary structure, associates with the mitochondrial contact site and cristae organizing system (MICOS) complex (also known as MINOS or MitOS complex).

Its subcellular location is the mitochondrion outer membrane. In terms of biological role, involved in transport of proteins into the mitochondrion. Essential for embryonic development. The sequence is that of Metaxin-1 homolog from Drosophila melanogaster (Fruit fly).